The following is a 315-amino-acid chain: NADH-ubiquinone oxidoreductase chain 1 (315 aa).

The next 8 membrane-spanning stretches (helical) occupy residues 6–26, 80–100, 107–127, 153–173, 177–197, 229–249, 253–273, and 292–312; these read FILS…SVAF, ISPI…PFFV, LGGL…MIAG, LALI…MYFF, IYIW…TISL, LIFM…CVIF, DVFN…FIWA, and CFLS…ILLF.

The protein belongs to the complex I subunit 1 family.

The protein resides in the mitochondrion inner membrane. It carries out the reaction a ubiquinone + NADH + 5 H(+)(in) = a ubiquinol + NAD(+) + 4 H(+)(out). Core subunit of the mitochondrial membrane respiratory chain NADH dehydrogenase (Complex I) that is believed to belong to the minimal assembly required for catalysis. Complex I functions in the transfer of electrons from NADH to the respiratory chain. The immediate electron acceptor for the enzyme is believed to be ubiquinone. The chain is NADH-ubiquinone oxidoreductase chain 1 (mt:ND1) from Drosophila persimilis (Fruit fly).